Reading from the N-terminus, the 131-residue chain is UPF0102 protein YraN (131 aa).

Residues 1-19 are compositionally biased toward polar residues; sequence MATVPTRSGSPRQLTTKQT. The disordered stretch occupies residues 1 to 20; it reads MATVPTRSGSPRQLTTKQTG.

This sequence belongs to the UPF0102 family.

The sequence is that of UPF0102 protein YraN from Shigella boydii serotype 18 (strain CDC 3083-94 / BS512).